Reading from the N-terminus, the 81-residue chain is Large ribosomal subunit protein uL23 (81 aa).

Belongs to the universal ribosomal protein uL23 family. Part of the 50S ribosomal subunit. Contacts protein L29.

Functionally, binds to 23S rRNA. One of the proteins that surrounds the polypeptide exit tunnel on the outside of the ribosome. In Saccharolobus solfataricus (strain ATCC 35092 / DSM 1617 / JCM 11322 / P2) (Sulfolobus solfataricus), this protein is Large ribosomal subunit protein uL23.